The following is a 281-amino-acid chain: MLRVAVPNKGALSESAITMLTEAGYRQRRSSRELVLVDNDNGVEFFYLRPRDIAIYVGGGTLDLGITGRDLLLDSGAEAAEELCLDFARSTFRLAGPLGQFSSVQDLQGKRIATSYQVLLERHLAEQGVDAEVVRLDGAVESSIRLGVADAIADVVETGNTLRAAGLEIFDEPIMTSEALLIRRGDEPEPEGLSVLRRRLQGVLVARQYVMMDYDIREELLPAATEITPGMEGPTISPLGRDGAVAVRSMVRKADTNKVMDALYEVGARAILVSPIQAARI.

Belongs to the ATP phosphoribosyltransferase family. Long subfamily. Requires Mg(2+) as cofactor.

Its subcellular location is the cytoplasm. The enzyme catalyses 1-(5-phospho-beta-D-ribosyl)-ATP + diphosphate = 5-phospho-alpha-D-ribose 1-diphosphate + ATP. The protein operates within amino-acid biosynthesis; L-histidine biosynthesis; L-histidine from 5-phospho-alpha-D-ribose 1-diphosphate: step 1/9. With respect to regulation, feedback inhibited by histidine. Catalyzes the condensation of ATP and 5-phosphoribose 1-diphosphate to form N'-(5'-phosphoribosyl)-ATP (PR-ATP). Has a crucial role in the pathway because the rate of histidine biosynthesis seems to be controlled primarily by regulation of HisG enzymatic activity. The polypeptide is ATP phosphoribosyltransferase (Kocuria rhizophila (strain ATCC 9341 / DSM 348 / NBRC 103217 / DC2201)).